The primary structure comprises 317 residues: Ret finger protein-like 1 (317 aa).

Residues 40 to 82 form an RING-type zinc finger; it reads CPVCSDYLEKPMSLECGCAVCFKCINSLQKEPHGEDLLCCCCS. The region spanning 107-301 is the B30.2/SPRY domain; sequence EPKLKKILQM…DKSVLSICPV (195 aa).

Post-translationally, phosphorylated by PKC and CDK1. The antiproliferative effect seems to be positively regulated by PKC phosphorylation and negatively by CDK1 phosphorylation. As to expression, seems to be expressed in prostate and less abundantly in adult brain, fetal liver, and fetal kidney.

It is found in the cytoplasm. The protein localises to the nucleus. Negatively regulates the G2-M phase transition, possibly by promoting cyclin B1/CCNB1 and CDK1 proteasomal degradation and thereby preventing their accumulation during interphase. This Homo sapiens (Human) protein is Ret finger protein-like 1 (RFPL1).